The chain runs to 513 residues: Histidine ammonia-lyase (513 aa).

Positions 144-146 (ASG) form a cross-link, 5-imidazolinone (Ala-Gly). Ser-145 is modified (2,3-didehydroalanine (Ser)).

It belongs to the PAL/histidase family. Contains an active site 4-methylidene-imidazol-5-one (MIO), which is formed autocatalytically by cyclization and dehydration of residues Ala-Ser-Gly.

Its subcellular location is the cytoplasm. The catalysed reaction is L-histidine = trans-urocanate + NH4(+). It functions in the pathway amino-acid degradation; L-histidine degradation into L-glutamate; N-formimidoyl-L-glutamate from L-histidine: step 1/3. In Streptococcus pyogenes serotype M6 (strain ATCC BAA-946 / MGAS10394), this protein is Histidine ammonia-lyase.